The chain runs to 115 residues: Large ribosomal subunit protein uL24 (115 aa).

Residues 49–68 (NMKTKHHPPSKDQEKGSITK) form a disordered region.

This sequence belongs to the universal ribosomal protein uL24 family. Part of the 50S ribosomal subunit.

In terms of biological role, one of two assembly initiator proteins, it binds directly to the 5'-end of the 23S rRNA, where it nucleates assembly of the 50S subunit. Functionally, one of the proteins that surrounds the polypeptide exit tunnel on the outside of the subunit. The protein is Large ribosomal subunit protein uL24 of Phytoplasma australiense.